A 358-amino-acid polypeptide reads, in one-letter code: UDP-N-acetylglucosamine--N-acetylmuramyl-(pentapeptide) pyrophosphoryl-undecaprenol N-acetylglucosamine transferase (358 aa).

2 residues coordinate UDP-N-acetyl-alpha-D-glucosamine: Ser197 and Gln288.

The protein belongs to the glycosyltransferase 28 family. MurG subfamily.

The protein localises to the cell membrane. The catalysed reaction is Mur2Ac(oyl-L-Ala-gamma-D-Glu-L-Lys-D-Ala-D-Ala)-di-trans,octa-cis-undecaprenyl diphosphate + UDP-N-acetyl-alpha-D-glucosamine = beta-D-GlcNAc-(1-&gt;4)-Mur2Ac(oyl-L-Ala-gamma-D-Glu-L-Lys-D-Ala-D-Ala)-di-trans,octa-cis-undecaprenyl diphosphate + UDP + H(+). It functions in the pathway cell wall biogenesis; peptidoglycan biosynthesis. Its function is as follows. Cell wall formation. Catalyzes the transfer of a GlcNAc subunit on undecaprenyl-pyrophosphoryl-MurNAc-pentapeptide (lipid intermediate I) to form undecaprenyl-pyrophosphoryl-MurNAc-(pentapeptide)GlcNAc (lipid intermediate II). This chain is UDP-N-acetylglucosamine--N-acetylmuramyl-(pentapeptide) pyrophosphoryl-undecaprenol N-acetylglucosamine transferase, found in Streptococcus agalactiae serotype Ia (strain ATCC 27591 / A909 / CDC SS700).